The following is a 324-amino-acid chain: Probable carboxylesterase 9 (324 aa).

An Involved in the stabilization of the negatively charged intermediate by the formation of the oxyanion hole motif is present at residues 86-88 (HGS). Active-site residues include Ser-171, Asp-272, and His-302.

This sequence belongs to the 'GDXG' lipolytic enzyme family. In terms of tissue distribution, expressed in flowers.

The enzyme catalyses a carboxylic ester + H2O = an alcohol + a carboxylate + H(+). Functionally, carboxylesterase acting on esters with varying acyl chain length. The chain is Probable carboxylesterase 9 (CXE9) from Arabidopsis thaliana (Mouse-ear cress).